The following is a 152-amino-acid chain: Large ribosomal subunit protein bL9 (152 aa).

The protein belongs to the bacterial ribosomal protein bL9 family.

Its function is as follows. Binds to the 23S rRNA. This chain is Large ribosomal subunit protein bL9, found in Corynebacterium urealyticum (strain ATCC 43042 / DSM 7109).